The chain runs to 580 residues: Protein O-linked-mannose beta-1,4-N-acetylglucosaminyltransferase 2 (580 aa).

Residues 1 to 4 (MHLS) lie on the Cytoplasmic side of the membrane. A helical; Signal-anchor for type II membrane protein membrane pass occupies residues 5-25 (AVLNALLVSVLAAVLWKHVRL). At 26-580 (REHAASLEEE…PFADVLVCST (555 aa)) the chain is on the lumenal side. Residues Asn-99 and Asn-276 are each glycosylated (N-linked (GlcNAc...) asparagine). Residues 488 to 580 (ARCQASVQGA…PFADVLVCST (93 aa)) form the Fibronectin type-III domain.

It belongs to the glycosyltransferase 61 family.

It is found in the endoplasmic reticulum membrane. It carries out the reaction 3-O-(alpha-D-mannosyl)-L-threonyl-[protein] + UDP-N-acetyl-alpha-D-glucosamine = 3-O-(N-acetyl-beta-D-glucosaminyl-(1-&gt;4)-alpha-D-mannosyl)-L-threonyl-[protein] + UDP + H(+). The protein operates within protein modification; protein glycosylation. Its function is as follows. O-linked mannose beta-1,4-N-acetylglucosaminyltransferase that transfers UDP-N-acetyl-D-glucosamine to the 4-position of the mannose to generate N-acetyl-D-glucosamine-beta-1,4-O-D-mannosylprotein. Involved in the biosynthesis of the phosphorylated O-mannosyl trisaccharide (N-acetylgalactosamine-beta-3-N-acetylglucosamine-beta-4-(phosphate-6-)mannose), a carbohydrate structure present in alpha-dystroglycan (DAG1), which is required for binding laminin G-like domain-containing extracellular proteins with high affinity. The protein is Protein O-linked-mannose beta-1,4-N-acetylglucosaminyltransferase 2 (POMGNT2) of Bos taurus (Bovine).